A 527-amino-acid chain; its full sequence is Probable protein kinase UbiB (527 aa).

The chain crosses the membrane as a helical span at residues 23–43 (ELLLELPLPFWLRALSWLLPW). Positions 125–488 (RFDSQPLASA…ESDARDQWPL (364 aa)) constitute a Protein kinase domain. ATP-binding positions include 131-139 (LASASVAQV) and Lys153. Catalysis depends on Asp288, which acts as the Proton acceptor. The helical transmembrane segment at 504-524 (LAPLLATWPAWLMVGGGLYLV) threads the bilayer.

It belongs to the ABC1 family. UbiB subfamily.

It localises to the cell inner membrane. It participates in cofactor biosynthesis; ubiquinone biosynthesis [regulation]. Functionally, is probably a protein kinase regulator of UbiI activity which is involved in aerobic coenzyme Q (ubiquinone) biosynthesis. The sequence is that of Probable protein kinase UbiB from Ectopseudomonas mendocina (strain ymp) (Pseudomonas mendocina).